We begin with the raw amino-acid sequence, 408 residues long: Snake venom 5'-nucleotidase (408 aa).

Positions 54 and 77 each coordinate Zn(2+). N-linked (GlcNAc...) asparagine glycosylation is found at N167 and N181. Disulfide bonds link C187-C192 and C199-C221. R188 serves as a coordination point for AMP. 3 residues coordinate AMP: N224, R229, and F252. C311 and C314 are joined by a disulfide. 2 residues coordinate AMP: F335 and D341. Propeptides (removed in mature form) lie at residues 385–388 and 385–408; these read DGTL and DGTL…FFIL.

It belongs to the 5'-nucleotidase family. Homodimer. Venom 5'-nucleotidases (or a part thereof) may be released into the venom via exosome-like vesicles. They may be attached via a GPI anchor to the membrane of these vesicles. Soluble forms of 5'-nucleotidase might be released by cleavage of the ectodomain in the exosome-like vesicles or venom gland cells. In terms of tissue distribution, expressed by the venom gland.

The protein resides in the membrane. It catalyses the reaction a ribonucleoside 5'-phosphate + H2O = a ribonucleoside + phosphate. The enzyme catalyses AMP + H2O = adenosine + phosphate. The catalysed reaction is GMP + H2O = guanosine + phosphate. It carries out the reaction ADP + H2O = AMP + phosphate + H(+). Its activity is regulated as follows. Is potently inhibited by metal ions Fe(3+), Cu(2+) and Zn(2+). Is enhanced by Mn(2+). Ca(2+) and Mg(2+) have no effect. Functionally, hydrolyzes nucleotides into nucleosides. Prefers AMP as the substrate but also cleaves GMP and ADP. Does not affect AMP, cAMP and cGMP. Inhibits ADP- and collagen-induced platelet aggregation. Snake venom 5'-nucleotidases are widely distributed among venomous snake taxa, but there is a lack of information about their biological activities. They have been shown to inhibit platelet aggregation. This effect may be due to the liberation of inhibitory AMP or adenosine by its action on ADP released upon initiation of aggregation. Venom 5'-nucleotidases are also known to synergistically act in vivo with other toxins like ADPases, phospholipases, and disintegrins to exert a more pronounced anti-coagulant effect. The polypeptide is Snake venom 5'-nucleotidase (Macrovipera lebetinus (Levantine viper)).